The chain runs to 226 residues: UPF0502 protein Gbem_0194 (226 aa).

This sequence belongs to the UPF0502 family.

This Citrifermentans bemidjiense (strain ATCC BAA-1014 / DSM 16622 / JCM 12645 / Bem) (Geobacter bemidjiensis) protein is UPF0502 protein Gbem_0194.